We begin with the raw amino-acid sequence, 672 residues long: MSSGGNSSNVNRNSGSSNVITLNDSDEETEDSNLGSSSSTNLCKVCGAEKAALHYGALSCVGCKGFFRRALLKADQLECAANGECTVSVLQKTQCRSCRFNKCLREGMNPAYVRPNRDAPPKPRKPTTTVATCDQTDRGRTTKSREEWMKKMTVEMRTILMTLLNIETKVMKGDTQQEASKLYPLKGIDKLSDIIETPIQLKGKRTEMRYEAYRMAGNDELCAIAYRRLIAAIDWVESLSPLLGHLTPQDKIALVKSSFAPLMVFNFCARTAEACQDENVLCLCNFAYVPRNISKMYEDTYHLGNGLVERALNELVAVYREYGMREEEIVCVNAMICLNPLAKDVSDSLFEKIVELRNRIADCLFSIVKEVRLSPTPNVCYGHILLSLATVTELANAMSENLQFAQTFSNQGEIPLLTDLFGCFTVEPFFKEVDELAAMSLEKAKAEKKKEMSTQTDRLPPPRALLKRQATIDEDSEEPARQNFRLLQPPNNFYITEMLDDLRNNHAENHLISLNFDASNVSNAIASRPSFEDLGTVPSGSTVTRRIGSNIQGPSHLPQCGSTVTQRPTVPSSTTSSTFYNFPPPPGYPPLNAGYTPNVNYPNLYQQPQYFQNFQQNNYPSQVMEQQNYGNVESTSYPFPRNDGFVYNHPNIPYSHHNNSLQQNNFHNQYAN.

Residues 1-19 show a composition bias toward low complexity; that stretch reads MSSGGNSSNVNRNSGSSNV. The interval 1 to 38 is disordered; the sequence is MSSGGNSSNVNRNSGSSNVITLNDSDEETEDSNLGSSS. The segment at residues 40–115 is a DNA-binding region (nuclear receptor); sequence TNLCKVCGAE…EGMNPAYVRP (76 aa). 2 NR C4-type zinc fingers span residues 43–63 and 79–98; these read CKVC…CVGC and CAAN…CRSC. The 270-residue stretch at 155–424 folds into the NR LBD domain; it reads EMRTILMTLL…PLLTDLFGCF (270 aa). Positions 550–577 are disordered; that stretch reads NIQGPSHLPQCGSTVTQRPTVPSSTTSS. Positions 562–577 are enriched in low complexity; sequence STVTQRPTVPSSTTSS.

Belongs to the nuclear hormone receptor family.

It localises to the nucleus. Orphan nuclear receptor. In Caenorhabditis elegans, this protein is Nuclear hormone receptor family member nhr-5 (nhr-5).